A 1385-amino-acid chain; its full sequence is DNA-directed RNA polymerase subunit beta (1385 aa).

Belongs to the RNA polymerase beta chain family. In terms of assembly, the RNAP catalytic core consists of 2 alpha, 1 beta, 1 beta' and 1 omega subunit. When a sigma factor is associated with the core the holoenzyme is formed, which can initiate transcription.

It catalyses the reaction RNA(n) + a ribonucleoside 5'-triphosphate = RNA(n+1) + diphosphate. Its function is as follows. DNA-dependent RNA polymerase catalyzes the transcription of DNA into RNA using the four ribonucleoside triphosphates as substrates. In Sulfurovum sp. (strain NBC37-1), this protein is DNA-directed RNA polymerase subunit beta.